Reading from the N-terminus, the 354-residue chain is Putative succinyl-diaminopimelate desuccinylase DapE (354 aa).

His-69 provides a ligand contact to Zn(2+). Asp-71 is an active-site residue. Position 95 (Asp-95) interacts with Zn(2+). Glu-125 serves as the catalytic Proton acceptor. Positions 126, 154, and 330 each coordinate Zn(2+).

Belongs to the peptidase M20A family. Homodimer. Requires Zn(2+) as cofactor. It depends on Co(2+) as a cofactor.

It catalyses the reaction N-succinyl-(2S,6S)-2,6-diaminopimelate + H2O = (2S,6S)-2,6-diaminopimelate + succinate. Its pathway is amino-acid biosynthesis; L-lysine biosynthesis via DAP pathway; LL-2,6-diaminopimelate from (S)-tetrahydrodipicolinate (succinylase route): step 3/3. In terms of biological role, catalyzes the hydrolysis of N-succinyl-L,L-diaminopimelic acid (SDAP), forming succinate and LL-2,6-diaminoheptanedioate (DAP), an intermediate involved in the bacterial biosynthesis of lysine and meso-diaminopimelic acid. This chain is Putative succinyl-diaminopimelate desuccinylase DapE (dapE), found in Mycobacterium tuberculosis (strain CDC 1551 / Oshkosh).